Consider the following 659-residue polypeptide: Threonine--tRNA ligase (659 aa).

A TGS domain is found at 7 to 70 (DSELIKLTLP…QQDGAIEIVT (64 aa)). Residues 253–555 (DHRKLGSELE…LIENFAGNFP (303 aa)) form a catalytic region. 3 residues coordinate Zn(2+): Cys351, His402, and His532.

Belongs to the class-II aminoacyl-tRNA synthetase family. Homodimer. The cofactor is Zn(2+).

The protein localises to the cytoplasm. It catalyses the reaction tRNA(Thr) + L-threonine + ATP = L-threonyl-tRNA(Thr) + AMP + diphosphate + H(+). In terms of biological role, catalyzes the attachment of threonine to tRNA(Thr) in a two-step reaction: L-threonine is first activated by ATP to form Thr-AMP and then transferred to the acceptor end of tRNA(Thr). Also edits incorrectly charged L-seryl-tRNA(Thr). The polypeptide is Threonine--tRNA ligase (Chloroherpeton thalassium (strain ATCC 35110 / GB-78)).